A 126-amino-acid chain; its full sequence is Large ribosomal subunit protein bL19 (126 aa).

Belongs to the bacterial ribosomal protein bL19 family.

Its function is as follows. This protein is located at the 30S-50S ribosomal subunit interface and may play a role in the structure and function of the aminoacyl-tRNA binding site. The polypeptide is Large ribosomal subunit protein bL19 (Dechloromonas aromatica (strain RCB)).